The sequence spans 26 residues: MTDCRYLIKRVIKIIIAVLQLILLFL.

The chain crosses the membrane as a helical span at residues 7–24; the sequence is LIKRVIKIIIAVLQLILL.

It localises to the membrane. Functionally, toxic component of a type I toxin-antitoxin (TA) system. May be a toxic protein; overexpression causes cessation of growth and rapid membrane depolarization. Overexpression induces stress-response and a number of membrane protein genes. This chain is Small toxic protein ShoB (shoB), found in Escherichia coli (strain K12).